The sequence spans 155 residues: MSRKGSTPQRTVLPDPKHGSETIARFINMVMQSGKKSVAEKIVYGAMDVIGEKNPNAVELVQKALDNVAPAVEVKSRRVGGATYQVPVEVRSSRRMALAMRWLIDSARKRGENTMPRKLAAELLDASESRGGAIKKREETHRMAEANKAFAHYRW.

This sequence belongs to the universal ribosomal protein uS7 family. In terms of assembly, part of the 30S ribosomal subunit. Contacts proteins S9 and S11.

One of the primary rRNA binding proteins, it binds directly to 16S rRNA where it nucleates assembly of the head domain of the 30S subunit. Is located at the subunit interface close to the decoding center, probably blocks exit of the E-site tRNA. The polypeptide is Small ribosomal subunit protein uS7 (Xanthomonas campestris pv. campestris (strain 8004)).